The chain runs to 78 residues: Probable [Fe-S]-dependent transcriptional repressor (78 aa).

Residues C56, C61, C64, and C70 each coordinate iron-sulfur cluster.

Belongs to the FeoC family.

Functionally, may function as a transcriptional regulator that controls feoABC expression. This chain is Probable [Fe-S]-dependent transcriptional repressor, found in Escherichia fergusonii (strain ATCC 35469 / DSM 13698 / CCUG 18766 / IAM 14443 / JCM 21226 / LMG 7866 / NBRC 102419 / NCTC 12128 / CDC 0568-73).